Consider the following 1137-residue polypeptide: MQWRGAGLWWPRRRQQQQQQQPPPPAFGPPAAAMVPPSRGVSPGLGGRPTSALLFLCYLNFVPSLGRQTSLTTSVLPRTEQSTTYADFIYFTAFEGSVRNVSEVSVEYLCSQPCVVHLEAVVSSEFRSSIPVYKKRWRNEKHLHTSRTQTVHVKFPSIMVYRDDYLIRHPISVSTVILRAWITHWHSGGGLNVRGEENLLHAVAKNYTLLQTVPPFERPFKDHQVCLEWNMDYLWSLWANRIPQCPLESDAVALLSFPYASSGENTGIVKKLQNFQNRELEATRSQRVDYPMVTISLWLYLLHYCEASLCGILYFVDSNEMYGTPSVFLTEDGSLHIQMHLVKGEDLAVKTKFTIPLKEWCRLDISFNGGQIVVTASIGWDLKSYHNQTISFHEDFYYNDTAGYFIIGGSRYVAGIEGFFGPVKYYRLRSLHPAQVLNPFLEKELAEQIKLYYERCTEVQDIISSYAATVQVGGERRETCDFHNSYLDLKRKYGRAEVCRGLPWEKELRDRHPSLFQSLLQMDLLTVPWNQNDSVLEIGARIFEKAVKRLSGVDGLHQISSAIPFLMDSSCCGYHKASYYLTVFYETGLNGPRDQLQGMLYSLVGGQGSERLSSMNLGYKHYQGVDSYPLDWELSYAYYSNIATKTPLDQHTLQGDQAYVETIRLKDDEILKVQTKEDGDVFMWLKHEATRGNAAAQQRLAQMLFWGQQGVAKNPEAAIEWYAKGALETEDPALIYDYAIVLFKGQGVKKNRRLALELMKKAASKGLHQAVNGLGWYYHKFRKNYAKAAKYWLKAEEMGNPDASYNLGVLYLDGIFPGVPGRNLTLAGEYFHKAAQGGHIEGTLWCSLYYITGNLETFPRDPEKAVVWAKHVAEKNGYLGHVIRKGLNAYLEGLWHEALLYYVLAAETGIEVSQTNLAHICEERPDLAGRYLGVNCVWRYYNFSVFQIDAPSFAYLKMGDLYYYGHQNQSQDLELSVQMYAQAALDGDSQGFFNLAALIEEGAVIPHHILEFLEIDPSLHSSNTSILQELYERCWSLSNEESLSPCSLAWLYLHLRLLWGAVLHSALIYFLGTFLLSVVIAWMVLYLQYISASGSSPAPAWVSADPTSSTPSPAVPPAADASDHDPPMMANGPEPRG.

Positions 1 to 42 are disordered; the sequence is MQWRGAGLWWPRRRQQQQQQQPPPPAFGPPAAAMVPPSRGVS. N-linked (GlcNAc...) asparagine glycosylation is found at Asn-206 and Asn-387. 7 Sel1-like repeats span residues 575-609, 611-647, 694-730, 732-767, 768-800, 801-839, and 840-877; these read HKAS…GQGS, RLSS…TKTP, AAAQ…LETE, PALI…SKGL, HQAV…EMGN, PDAS…QGGH, and IEGT…EKNG. Phosphoserine is present on Ser-613. N-linked (GlcNAc...) asparagine glycosylation is present at Asn-942. The Sel1-like 8 repeat unit spans residues 952–988; the sequence is SFAYLKMGDLYYYGHQNQSQDLELSVQMYAQAALDGD. Residues 1067-1087 traverse the membrane as a helical segment; that stretch reads LIYFLGTFLLSVVIAWMVLYL. A disordered region spans residues 1100–1137; that stretch reads AWVSADPTSSTPSPAVPPAADASDHDPPMMANGPEPRG. Positions 1102–1120 are enriched in low complexity; that stretch reads VSADPTSSTPSPAVPPAAD.

It localises to the membrane. This chain is Protein sel-1 homolog 3 (Sel1l3), found in Mus musculus (Mouse).